The sequence spans 277 residues: Protein RKD3 (277 aa).

The RWP-RK domain maps to 142 to 226 (KRIIMKRRYR…LGNTKGRTPK (85 aa)). Residues 201 to 246 (RKLTSLNALIANLKDLLGNTKGRTPKSKLRNALELLEMEKKMIEEV) are a coiled coil.

Its subcellular location is the nucleus. Functionally, putative transcription factor. The chain is Protein RKD3 (RKD3) from Arabidopsis thaliana (Mouse-ear cress).